Reading from the N-terminus, the 190-residue chain is Peptidyl-tRNA hydrolase (190 aa).

Tyr-14 contacts tRNA. His-19 functions as the Proton acceptor in the catalytic mechanism. Residues Tyr-64, Asn-66, and Asn-112 each coordinate tRNA.

Belongs to the PTH family. Monomer.

It is found in the cytoplasm. It catalyses the reaction an N-acyl-L-alpha-aminoacyl-tRNA + H2O = an N-acyl-L-amino acid + a tRNA + H(+). Functionally, hydrolyzes ribosome-free peptidyl-tRNAs (with 1 or more amino acids incorporated), which drop off the ribosome during protein synthesis, or as a result of ribosome stalling. Its function is as follows. Catalyzes the release of premature peptidyl moieties from peptidyl-tRNA molecules trapped in stalled 50S ribosomal subunits, and thus maintains levels of free tRNAs and 50S ribosomes. In Chlorobium limicola (strain DSM 245 / NBRC 103803 / 6330), this protein is Peptidyl-tRNA hydrolase.